The following is a 1179-amino-acid chain: Integrin alpha-7 (1179 aa).

A signal peptide spans 1-33 (MARIPRCDFLRPPGIYYLITSLLAGLFLPPAIA). Topologically, residues 34–1076 (FNLDVMGAIR…YLDPMAVVVE (1043 aa)) are extracellular. FG-GAP repeat units lie at residues 38-103 (VMGA…ETDC), 110-175 (RGAN…IRDE), 185-238 (EGRP…SPDL), 292-349 (DRLT…ATRL), 350-411 (IPEV…HWAD), 412-467 (ISPL…GVVV), and 471-530 (QVLE…IDPR). A glycan (N-linked (GlcNAc...) asparagine) is linked at N86. Cystine bridges form between C94-C103, C140-C163, and C184-C197. Positions 372, 374, 376, 380, 434, 436, 438, 442, 492, 494, 496, 498, and 500 each coordinate Ca(2+). Cystine bridges form between C539–C546, C552–C615, C681–C687, C781–C792, C939–C993, and C999–C1004. N784 is a glycosylation site (N-linked (GlcNAc...) asparagine). The segment covering 952-961 (SRDRRRRELG) has biased composition (basic and acidic residues). Residues 952-978 (SRDRRRRELGQPEPQEPPEKVEPSTSW) form a disordered region. N-linked (GlcNAc...) asparagine glycosylation occurs at N988. N-linked (GlcNAc...) asparagine glycans are attached at residues N1023 and N1043. Residues 1077–1102 (GVPWWVILLGVLAGLLVLALLVLLLW) traverse the membrane as a helical segment. At 1103–1179 (KLGFFKRAKH…PDGHPVPATA (77 aa)) the chain is on the cytoplasmic side. A GFFKR motif motif is present at residues 1105–1109 (GFFKR). Residues 1134-1153 (KEEKTGTIQRSNWGNSQWEG) are disordered. Residues 1139 to 1152 (GTIQRSNWGNSQWE) show a composition bias toward polar residues. 3 repeat units span residues 1155–1158 (DAHP), 1163–1166 (DWHP), and 1171–1174 (DGHP). Residues 1155 to 1174 (DAHPILAADWHPELGPDGHP) form a 3 X 4 AA repeats of D-X-H-P region.

It belongs to the integrin alpha chain family. Heterodimer of an alpha and a beta subunit. The alpha subunit is composed of a heavy and a light chain linked by a disulfide bond. Alpha-7 associates with beta-1. Interacts with COMP. Interacts (via C-terminus intracellular tail region) with CIB1; the interaction is stabilized/increased in a calcium- and magnesium-dependent manner. In terms of processing, ADP-ribosylated on at least two sites of the extracellular domain in skeletal myotubes (in vitro). No proteolytic cleavage to produce the 70 kDa form is seen due to the presence of a Gly instead of an arginine residue at position 647. Isoforms containing segment X2 are found in adult heart, lung and skeletal muscle. Isoforms containing segment X1 are expressed in adult heart, lung and in proliferating skeletal myoblasts but not in adult skeletal muscle. Isoforms containing segment a are exclusively found in skeletal muscle. Isoforms containing segment B are widely expressed. In muscle fibers isoforms containing segment A and B are expressed at myotendinous and neuromuscular junctions; isoforms containing segment C are expressed at neuromuscular junctions and at extrasynaptic sites.

It localises to the membrane. Functionally, integrin alpha-7/beta-1 is the primary laminin receptor on skeletal myoblasts and adult myofibers. During myogenic differentiation, it may induce changes in the shape and mobility of myoblasts, and facilitate their localization at laminin-rich sites of secondary fiber formation. Involved in the maintenance of the myofibers cytoarchitecture as well as for their anchorage, viability and functional integrity. Mice carrying a ITGA7 null allele are viable and fertile, but show progressive muscular dystrophy starting soon after birth, but with a distinct variability in different muscle types. Required to promote contractile phenotype acquisition in differentiated airway smooth muscle (ASM) cells. Acts as a Schwann cell receptor for laminin-2. Acts as a receptor of COMP and mediates its effect on vascular smooth muscle cells (VSMCs) maturation. The polypeptide is Integrin alpha-7 (Itga7) (Mus musculus (Mouse)).